Here is a 254-residue protein sequence, read N- to C-terminus: Glutamate racemase (254 aa).

Substrate is bound by residues 10 to 11 (DS) and 42 to 43 (YG). The active-site Proton donor/acceptor is the Cys-73. 74–75 (NT) contributes to the substrate binding site. Cys-183 functions as the Proton donor/acceptor in the catalytic mechanism. A substrate-binding site is contributed by 184–185 (TH).

It belongs to the aspartate/glutamate racemases family.

It carries out the reaction L-glutamate = D-glutamate. It functions in the pathway cell wall biogenesis; peptidoglycan biosynthesis. In terms of biological role, provides the (R)-glutamate required for cell wall biosynthesis. The polypeptide is Glutamate racemase (Herpetosiphon aurantiacus (strain ATCC 23779 / DSM 785 / 114-95)).